Here is a 181-residue protein sequence, read N- to C-terminus: Protein GrpE (181 aa).

The disordered stretch occupies residues 1–21 (MNKEQQDLQTEQEAAVETAEL). Residues 8 to 21 (LQTEQEAAVETAEL) are compositionally biased toward low complexity.

This sequence belongs to the GrpE family. As to quaternary structure, homodimer.

The protein localises to the cytoplasm. In terms of biological role, participates actively in the response to hyperosmotic and heat shock by preventing the aggregation of stress-denatured proteins, in association with DnaK and GrpE. It is the nucleotide exchange factor for DnaK and may function as a thermosensor. Unfolded proteins bind initially to DnaJ; upon interaction with the DnaJ-bound protein, DnaK hydrolyzes its bound ATP, resulting in the formation of a stable complex. GrpE releases ADP from DnaK; ATP binding to DnaK triggers the release of the substrate protein, thus completing the reaction cycle. Several rounds of ATP-dependent interactions between DnaJ, DnaK and GrpE are required for fully efficient folding. This chain is Protein GrpE, found in Trichlorobacter lovleyi (strain ATCC BAA-1151 / DSM 17278 / SZ) (Geobacter lovleyi).